The primary structure comprises 239 residues: Ribonuclease PH (239 aa).

Residues arginine 86 and 124–126 (GTR) each bind phosphate.

The protein belongs to the RNase PH family. In terms of assembly, homohexameric ring arranged as a trimer of dimers.

The enzyme catalyses tRNA(n+1) + phosphate = tRNA(n) + a ribonucleoside 5'-diphosphate. Phosphorolytic 3'-5' exoribonuclease that plays an important role in tRNA 3'-end maturation. Removes nucleotide residues following the 3'-CCA terminus of tRNAs; can also add nucleotides to the ends of RNA molecules by using nucleoside diphosphates as substrates, but this may not be physiologically important. Probably plays a role in initiation of 16S rRNA degradation (leading to ribosome degradation) during starvation. The chain is Ribonuclease PH from Rickettsia felis (strain ATCC VR-1525 / URRWXCal2) (Rickettsia azadi).